A 158-amino-acid polypeptide reads, in one-letter code: S-ribosylhomocysteine lyase (158 aa).

Fe cation contacts are provided by H54, H58, and C124.

The protein belongs to the LuxS family. As to quaternary structure, homodimer. Fe cation serves as cofactor.

The catalysed reaction is S-(5-deoxy-D-ribos-5-yl)-L-homocysteine = (S)-4,5-dihydroxypentane-2,3-dione + L-homocysteine. In terms of biological role, involved in the synthesis of autoinducer 2 (AI-2) which is secreted by bacteria and is used to communicate both the cell density and the metabolic potential of the environment. The regulation of gene expression in response to changes in cell density is called quorum sensing. Catalyzes the transformation of S-ribosylhomocysteine (RHC) to homocysteine (HC) and 4,5-dihydroxy-2,3-pentadione (DPD). In Lactobacillus johnsonii (strain CNCM I-12250 / La1 / NCC 533), this protein is S-ribosylhomocysteine lyase.